The chain runs to 359 residues: Fructose-bisphosphate aldolase (359 aa).

Position 50 (S50) interacts with D-glyceraldehyde 3-phosphate. The Proton donor role is filled by D83. Zn(2+)-binding residues include H84, D105, E142, and H198. G199 provides a ligand contact to dihydroxyacetone phosphate. A Zn(2+)-binding site is contributed by H232. Dihydroxyacetone phosphate-binding positions include 233–235 and 275–278; these read GSS and NIDT.

This sequence belongs to the class II fructose-bisphosphate aldolase family. In terms of assembly, homodimer. The cofactor is Zn(2+).

It carries out the reaction beta-D-fructose 1,6-bisphosphate = D-glyceraldehyde 3-phosphate + dihydroxyacetone phosphate. The protein operates within carbohydrate biosynthesis; Calvin cycle. Its pathway is carbohydrate degradation; glycolysis; D-glyceraldehyde 3-phosphate and glycerone phosphate from D-glucose: step 4/4. Catalyzes the aldol condensation of dihydroxyacetone phosphate (DHAP or glycerone-phosphate) with glyceraldehyde 3-phosphate (G3P) to form fructose 1,6-bisphosphate (FBP) in gluconeogenesis and the reverse reaction in glycolysis. The protein is Fructose-bisphosphate aldolase (cbbA) of Rhizobium meliloti (strain 1021) (Ensifer meliloti).